Here is a 107-residue protein sequence, read N- to C-terminus: Putative double-stranded DNA mimic protein HS_0995 (107 aa).

It belongs to the putative dsDNA mimic protein family.

May act as a double-stranded DNA (dsDNA) mimic. Probably regulates the activity of a dsDNA-binding protein. The polypeptide is Putative double-stranded DNA mimic protein HS_0995 (Histophilus somni (strain 129Pt) (Haemophilus somnus)).